Reading from the N-terminus, the 88-residue chain is MSENGKDVYEALRADVICGTACARRMGAIVFHGLWRGLAVLIAPHQSAIARQQSAPRFKTTSMVAHDRQLVHMLANMVLAAETGSHVY.

This is an uncharacterized protein from Sinorhizobium fredii (strain NBRC 101917 / NGR234).